A 435-amino-acid chain; its full sequence is Enolase (435 aa).

Gln-163 contributes to the (2R)-2-phosphoglycerate binding site. Glu-205 (proton donor) is an active-site residue. Residues Asp-243, Glu-292, and Asp-319 each coordinate Mg(2+). (2R)-2-phosphoglycerate contacts are provided by Lys-344, Arg-373, Ser-374, and Lys-395. Lys-344 acts as the Proton acceptor in catalysis.

The protein belongs to the enolase family. Requires Mg(2+) as cofactor.

Its subcellular location is the cytoplasm. It localises to the secreted. The protein localises to the cell surface. It carries out the reaction (2R)-2-phosphoglycerate = phosphoenolpyruvate + H2O. The protein operates within carbohydrate degradation; glycolysis; pyruvate from D-glyceraldehyde 3-phosphate: step 4/5. In terms of biological role, catalyzes the reversible conversion of 2-phosphoglycerate (2-PG) into phosphoenolpyruvate (PEP). It is essential for the degradation of carbohydrates via glycolysis. This chain is Enolase, found in Streptococcus agalactiae serotype Ia (strain ATCC 27591 / A909 / CDC SS700).